The primary structure comprises 427 residues: Adenylosuccinate synthetase (427 aa).

GTP-binding positions include glycine 12–lysine 18 and glycine 40–threonine 42. Catalysis depends on aspartate 13, which acts as the Proton acceptor. Positions 13 and 40 each coordinate Mg(2+). Residues aspartate 13–lysine 16, asparagine 38–histidine 41, threonine 128, arginine 142, glutamine 223, threonine 238, and arginine 302 each bind IMP. Catalysis depends on histidine 41, which acts as the Proton donor. Threonine 298–arginine 304 serves as a coordination point for substrate. Residues arginine 304, lysine 330–aspartate 332, and alanine 412–glycine 414 each bind GTP.

This sequence belongs to the adenylosuccinate synthetase family. Homodimer. Requires Mg(2+) as cofactor.

The protein resides in the cytoplasm. The catalysed reaction is IMP + L-aspartate + GTP = N(6)-(1,2-dicarboxyethyl)-AMP + GDP + phosphate + 2 H(+). It participates in purine metabolism; AMP biosynthesis via de novo pathway; AMP from IMP: step 1/2. In terms of biological role, plays an important role in the de novo pathway of purine nucleotide biosynthesis. Catalyzes the first committed step in the biosynthesis of AMP from IMP. The polypeptide is Adenylosuccinate synthetase (Moorella thermoacetica (strain ATCC 39073 / JCM 9320)).